The following is a 339-amino-acid chain: Ketol-acid reductoisomerase (NADP(+)) (339 aa).

The KARI N-terminal Rossmann domain maps to 1–182 (MRVYYDRDAD…GGGRAGVIET (182 aa)). NADP(+) contacts are provided by residues 24–27 (YGSQ), Arg-48, Ser-51, Thr-53, and 83–86 (DELQ). Residue His-108 is part of the active site. Gly-134 contributes to the NADP(+) binding site. The KARI C-terminal knotted domain occupies 183–328 (TFKEECETDL…KKLRSMMPWI (146 aa)). Mg(2+) contacts are provided by Asp-191, Glu-195, Glu-227, and Glu-231. A substrate-binding site is contributed by Ser-252.

It belongs to the ketol-acid reductoisomerase family. It depends on Mg(2+) as a cofactor.

The enzyme catalyses (2R)-2,3-dihydroxy-3-methylbutanoate + NADP(+) = (2S)-2-acetolactate + NADPH + H(+). It catalyses the reaction (2R,3R)-2,3-dihydroxy-3-methylpentanoate + NADP(+) = (S)-2-ethyl-2-hydroxy-3-oxobutanoate + NADPH + H(+). The protein operates within amino-acid biosynthesis; L-isoleucine biosynthesis; L-isoleucine from 2-oxobutanoate: step 2/4. Its pathway is amino-acid biosynthesis; L-valine biosynthesis; L-valine from pyruvate: step 2/4. Its function is as follows. Involved in the biosynthesis of branched-chain amino acids (BCAA). Catalyzes an alkyl-migration followed by a ketol-acid reduction of (S)-2-acetolactate (S2AL) to yield (R)-2,3-dihydroxy-isovalerate. In the isomerase reaction, S2AL is rearranged via a Mg-dependent methyl migration to produce 3-hydroxy-3-methyl-2-ketobutyrate (HMKB). In the reductase reaction, this 2-ketoacid undergoes a metal-dependent reduction by NADPH to yield (R)-2,3-dihydroxy-isovalerate. In Bartonella tribocorum (strain CIP 105476 / IBS 506), this protein is Ketol-acid reductoisomerase (NADP(+)).